The sequence spans 1507 residues: MEPLDQRRTDSDQEEGFGVQSRRATDLGMVPNLRRSNSSLCKSRRLLCSFSSEKQENLSSWIPENIKKKECVYFVESSKLSDAGKVVCECGYTHEQHIEVAIKPHTFQGKEWDPKKHVHEMPTDAFGDIVFTGLSQKVGKYVRLSQDTSSIVIYQLMTQHWGLDVPSLLISVTGGAKNFNMKLRLKSIFRRGLVKVAQTTGAWIITGGSHTGVMKQVGEAVRDFSLSSSCKEGDVITIGIATWGTIHNREALIHPMGGFPAEYMLDEEGQGNLTCLDSNHSHFILVDDGTHGQYGVEIPLRTKLEKFISEQTKERGGVAIKIPIVCVVLEGGPGTLHTIYNAITNGTPCVIVEGSGRVADVIAQVAALPVSEITISLIQQKLSVFFQEMFETFTENQIVEWTKKIQDIVRRRQLLTVFREGKDGQQDVDVAILQALLKASRSQDHFGHENWDHQLKLAVAWNRVDIARSEIFTDEWQWKPSDLHPMMTAALISNKPEFVRLFLENGVRLKEFVTWDTLLCLYENLEPSCLFHSKLQKVLAEEHERLAYASETPRLQMHHVAQVLRELLGDSTQLLYPRPRYTDRPRLSLPMPHIKLNVQGVSLRSLYKRSTGHVTFTIDPVRDLLIWAIIQNHRELAGIIWAQSQDCTAAALACSKILKELSKEEEDTDSSEEMLALADEFEHRAIGVFTECYRKDEERAQKLLVRVSEAWGKTTCLQLALEAKDMKFVSHGGIQAFLTKVWWGQLCVDNGLWRIILCMLAFPLLFTGFISFREKRLQALCRLARVRAFFNAPVVIFYLNILSYFAFLCLFAYVLMVDFQPSPSWCEYLIYLWLFSLVCEETRQLFYDPDGCGLMKMASLYFSDFWNKLDVGAILLFIAGLTCRLIPATLYPGRIILSLDFIMFCLRLMHIFTISKTLGPKIIIVKRMMKDVFFFLFLLAVWVVSFGVAKQAILIHNESRVDWIFRGVIYHSYLTIFGQIPTYIDGVNFSMDQCSPNGTDPYKPKCPESDWTGQAPAFPEWLTVTLLCLYLLFANILLLNLLIAMFNYTFQEVQEHTDQIWKFQRHDLIEEYHGRPPAPPPLILLSHLQLLIKRIVLKIPAKRHKQLKNKLEKNEEAALLSWELYLKENYLQNQQYQHKQRPEQKIQDISEKVDTMVDLLDMDRVKRSGSTEQRLASLEEQVTQMGRSLHWIVTTLKDSGFGSGAGALTLAQRAFDEPDAELSIRKKGEEGGDGYHVSARHLLYPDARIMRFPVPNEKVPWEAEFLIYDPPFYTAEKKDATLTDPVGDTAEPLSKINYNVVDGLMDRCSFHGTYVVQYGFPLNPMGRTGLRGRGSLSWFGPNHTLQPVVTRWKRNQGGGICRKSVRKMLEVLVVKLPQSEHWALPGGSREPGKMLPRKLKQVLQQEYWVTFETLLRQGTEVYKGYVDDPRNTDNAWIETVAVSIHFQDQNDVELKRLEENLQTHDPKESARGLEMSTEWQVVDRRIPLYVNHKKILQKVASLFGAHF.

The span at 1–11 shows a compositional bias: basic and acidic residues; sequence MEPLDQRRTDS. Positions 1 to 24 are disordered; that stretch reads MEPLDQRRTDSDQEEGFGVQSRRA. Residues 1–751 are Cytoplasmic-facing; the sequence is MEPLDQRRTD…WWGQLCVDNG (751 aa). Residues Thr173, Asn178, Arg301, Gly332, and Thr335 each coordinate ADP-D-ribose. Thr739 bears the Phosphothreonine mark. An intramembrane segment occupies 752-768; it reads LWRIILCMLAFPLLFTG. The Cytoplasmic portion of the chain corresponds to 769–793; that stretch reads FISFREKRLQALCRLARVRAFFNAP. Residues 794-814 form a helical membrane-spanning segment; the sequence is VVIFYLNILSYFAFLCLFAYV. The Extracellular portion of the chain corresponds to 815–825; the sequence is LMVDFQPSPSW. A helical transmembrane segment spans residues 826-846; it reads CEYLIYLWLFSLVCEETRQLF. Ca(2+)-binding residues include Glu841 and Gln844. The Cytoplasmic portion of the chain corresponds to 847–865; it reads YDPDGCGLMKMASLYFSDF. The chain crosses the membrane as a helical span at residues 866–886; it reads WNKLDVGAILLFIAGLTCRLI. Asn867 is a binding site for Ca(2+). Over 887–894 the chain is Extracellular; it reads PATLYPGR. Residues 895-915 traverse the membrane as a helical segment; sequence IILSLDFIMFCLRLMHIFTIS. At 916–927 the chain is on the cytoplasmic side; the sequence is KTLGPKIIIVKR. A helical membrane pass occupies residues 928 to 948; it reads MMKDVFFFLFLLAVWVVSFGV. Residues 949 to 968 lie on the Extracellular side of the membrane; the sequence is AKQAILIHNESRVDWIFRGV. An intramembrane region (pore-forming) is located at residues 969–983; sequence IYHSYLTIFGQIPTY. A Selectivity filter motif is present at residues 977-980; sequence FGQI. Over 984–1020 the chain is Extracellular; that stretch reads IDGVNFSMDQCSPNGTDPYKPKCPESDWTGQAPAFPE. Cys994 and Cys1006 are oxidised to a cystine. The chain crosses the membrane as a helical span at residues 1021 to 1042; the sequence is WLTVTLLCLYLLFANILLLNLL. The Cytoplasmic segment spans residues 1043-1077; that stretch reads IAMFNYTFQEVQEHTDQIWKFQRHDLIEEYHGRPP. Residue Glu1071 participates in Ca(2+) binding. The stretch at 1078 to 1096 is an intramembrane region; the sequence is APPPLILLSHLQLLIKRIV. Over 1097-1507 the chain is Cytoplasmic; it reads LKIPAKRHKQ…KVASLFGAHF (411 aa). Positions 1351 to 1502 constitute a Nudix hydrolase domain; sequence RWKRNQGGGI…KKILQKVASL (152 aa). Position 1379 (Ser1379) interacts with ADP-D-ribose. The short motif at 1387–1408 is the Nudix box element; that stretch reads GSREPGKMLPRKLKQVLQQEYW. Residues Asp1428, Arg1430, Tyr1489, and Asn1491 each coordinate ADP-D-ribose.

The protein belongs to the transient receptor (TC 1.A.4) family. LTrpC subfamily. TRPM2 sub-subfamily. In terms of assembly, homotetramer. Phosphorylation of TRPM2 at Thr-739 by protein kinase C (PKC) counteracts the effect of cytosolic Ca(2+) and elevates the temperature threshold. In terms of tissue distribution, detected in pancreas beta-cells. Detected in fetal brain cortex neurons (at protein level).

Its subcellular location is the cell membrane. It localises to the perikaryon. It is found in the cell projection. The protein localises to the cytoplasmic vesicle. The protein resides in the lysosome. The catalysed reaction is Ca(2+)(in) = Ca(2+)(out). It catalyses the reaction Na(+)(in) = Na(+)(out). Activated by intracellular ADP-ribose, beta-NAD (NAD(+)) and similar compounds, and by oxidative stress caused by reactive oxygen or nitrogen species. Ca(2+) and PI(4,5)P2 are required for channel opening by ADP-ribose. Activation by ADP-ribose and beta-NAD is strongly increased by moderate heat (35 to 40 degrees Celsius). Likewise, reactive oxygen species lower the threshold for activation by moderate heat (37 degrees Celsius). Activated by moderate heat (35 to 40 degrees Celsius). Inactivated by exposure to extracellular pH between 4.0 and 6.5; irreversibly inactivated when open channels are exposed to extracellular pH between 4.0 and 6.5, while pre-exposure of closed channels to extracellular pH 5.5 gives rise to currents that rapidly inactivate, but protects against irreversible inactivation. Inactivated by intracellular ATP. Activated by arachidonic acid. Inhibited by 2-aminoethyl diphenylborinate (2-APB). Nonselective, voltage-independent cation channel that mediates Na(+) and Ca(2+) influx, leading to increased cytoplasmic Ca(2+) levels. Functions as a ligand-gated ion channel gated by intracellular adenosine diphosphate ribose (ADP-ribose), Ca(2+), warm temperature, and oxidative stress. The precise physiological activators are under debate; the true, physiological activators may be ADP-ribose and ADP-ribose-2'-phosphate. Binding of ADP-ribose to the cytoplasmic Nudix domain causes a conformation change; the channel is primed but still requires Ca(2+) binding to trigger channel opening. Extracellular Ca(2+) passes through the channel and increases channel activity. Also contributes to Ca(2+) release from intracellular stores in response to ADP-ribose. Plays a role in numerous processes that involve signaling via intracellular Ca(2+) levels. Besides, mediates the release of lysosomal Zn(2+) stores in response to reactive oxygen species, leading to increased cytosolic Zn(2+) levels. Plays a role in insulin secretion, a process that requires increased cytoplasmic Ca(2+) levels. Required for normal IFNG and cytokine secretion and normal innate immune immunity in response to bacterial infection. Required for normal phagocytosis and cytokine release by macrophages exposed to zymosan (in vitro). Plays a role in dendritic cell differentiation and maturation, and in dendritic cell chemotaxis via its role in regulating cytoplasmic Ca(2+) levels. Plays a role in the regulation of the reorganization of the actin cytoskeleton and filopodia formation in response to reactive oxygen species via its function in increasing cytoplasmic Ca(2+) and Zn(2+) levels. Confers susceptibility to cell death following oxidative stress. The sequence is that of Transient receptor potential cation channel subfamily M member 2 from Rattus norvegicus (Rat).